The chain runs to 342 residues: Cytosolic Fe-S cluster assembly factor NBP35 (342 aa).

A disordered region spans residues 1-45 (MGPSLETPEPVEDVLANPLKQKPQLVAPEPEHCPGPESEQAGTAD). [4Fe-4S] cluster-binding residues include C33, C47, C50, and C56. An ATP-binding site is contributed by 86-93 (GKGGVGKS). [4Fe-4S] cluster-binding residues include C259 and C262.

The protein belongs to the Mrp/NBP35 ATP-binding proteins family. NUBP1/NBP35 subfamily. In terms of assembly, heterotetramer of 2 NBP35 and 2 CFD1 chains. Requires [4Fe-4S] cluster as cofactor.

The protein localises to the cytoplasm. In terms of biological role, component of the cytosolic iron-sulfur (Fe/S) protein assembly (CIA) machinery. Required for maturation of extramitochondrial Fe-S proteins. The NBP35-CFD1 heterotetramer forms a Fe-S scaffold complex, mediating the de novo assembly of an Fe-S cluster and its transfer to target apoproteins. This chain is Cytosolic Fe-S cluster assembly factor NBP35, found in Chaetomium globosum (strain ATCC 6205 / CBS 148.51 / DSM 1962 / NBRC 6347 / NRRL 1970) (Soil fungus).